We begin with the raw amino-acid sequence, 652 residues long: DNA ligase (652 aa).

Residues 29–33, 78–79, and Glu107 contribute to the NAD(+) site; these read DSDYD and SL. Lys109 (N6-AMP-lysine intermediate) is an active-site residue. NAD(+)-binding residues include Arg130, Glu164, Lys278, and Lys302. The Zn(2+) site is built by Cys395, Cys398, Cys413, and Cys418. The region spanning 577 to 652 is the BRCT domain; that stretch reads NSDAALFGLT…IEDEDWLRQL (76 aa).

The protein belongs to the NAD-dependent DNA ligase family. LigA subfamily. The cofactor is Mg(2+). Mn(2+) serves as cofactor.

The catalysed reaction is NAD(+) + (deoxyribonucleotide)n-3'-hydroxyl + 5'-phospho-(deoxyribonucleotide)m = (deoxyribonucleotide)n+m + AMP + beta-nicotinamide D-nucleotide.. DNA ligase that catalyzes the formation of phosphodiester linkages between 5'-phosphoryl and 3'-hydroxyl groups in double-stranded DNA using NAD as a coenzyme and as the energy source for the reaction. It is essential for DNA replication and repair of damaged DNA. This chain is DNA ligase, found in Streptococcus pyogenes serotype M3 (strain ATCC BAA-595 / MGAS315).